A 174-amino-acid chain; its full sequence is Ribosome rescue factor SmrB (174 aa).

Positions 96 to 171 (LDLHGLTQQQ…GDAAILVLIE (76 aa)) constitute a Smr domain.

Belongs to the SmrB family. Associates with collided ribosomes, but not with correctly translating polysomes.

In terms of biological role, acts as a ribosome collision sensor. Detects stalled/collided disomes (pairs of ribosomes where the leading ribosome is stalled and a second ribosome has collided with it) and endonucleolytically cleaves mRNA at the 5' boundary of the stalled ribosome. Stalled/collided disomes form a new interface (primarily via the 30S subunits) that binds SmrB. Cleaved mRNA becomes available for tmRNA ligation, leading to ribosomal subunit dissociation and rescue of stalled ribosomes. The sequence is that of Ribosome rescue factor SmrB from Tolumonas auensis (strain DSM 9187 / NBRC 110442 / TA 4).